A 195-amino-acid polypeptide reads, in one-letter code: ATP-dependent Clp protease proteolytic subunit (195 aa).

The Nucleophile role is filled by serine 97. Histidine 122 is a catalytic residue.

The protein belongs to the peptidase S14 family. As to quaternary structure, fourteen ClpP subunits assemble into 2 heptameric rings which stack back to back to give a disk-like structure with a central cavity, resembling the structure of eukaryotic proteasomes.

It is found in the cytoplasm. It carries out the reaction Hydrolysis of proteins to small peptides in the presence of ATP and magnesium. alpha-casein is the usual test substrate. In the absence of ATP, only oligopeptides shorter than five residues are hydrolyzed (such as succinyl-Leu-Tyr-|-NHMec, and Leu-Tyr-Leu-|-Tyr-Trp, in which cleavage of the -Tyr-|-Leu- and -Tyr-|-Trp bonds also occurs).. In terms of biological role, cleaves peptides in various proteins in a process that requires ATP hydrolysis. Has a chymotrypsin-like activity. Plays a major role in the degradation of misfolded proteins. This chain is ATP-dependent Clp protease proteolytic subunit, found in Lactobacillus gasseri (strain ATCC 33323 / DSM 20243 / BCRC 14619 / CIP 102991 / JCM 1131 / KCTC 3163 / NCIMB 11718 / NCTC 13722 / AM63).